Here is an 822-residue protein sequence, read N- to C-terminus: Integrator complex assembly factor BRAT1 (822 aa).

The segment at 100-200 (LGLFGESGAP…WPMCAQKIVN (101 aa)) is required for interaction with NDFIP1. HEAT repeat units lie at residues 495 to 531 (LLFLGELFPILQKRLCSPCWEVRDSALEFLTHLIRHW) and 544 to 576 (SEVPTLALQLLQDPESYVRASAVGAAGQLSSQG). Serine 743 is subject to Phosphoserine. The short motif at 820 to 822 (DCY) is the BRAT1-like motif element. Zn(2+) is bound at residue cysteine 821.

Belongs to the BRAT1 family. In terms of assembly, part of the multiprotein complex composed of BRAT1, WDR73, as well as integrator complex subunits INTS9 and INTS11. Interacts with BRCA1 and ATM. Interacts with MTOR and RPTOR. Interacts with NDFIP1. Interacts with SMC1A and PRKDC. In terms of processing, ubiquitinated by NEDD4, NEDD4L and ITCH; mono- and polyubiquitinated forms are detected. As to expression, high levels detected in the cortex and much lower levels detected in the cerebellum, spinal cord and lung (at protein level).

Its subcellular location is the nucleus. The protein localises to the cytoplasm. Component of a multiprotein complex required for the assembly of the RNA endonuclease module of the integrator complex. Associates with INTS9 and INTS11 in the cytoplasm and blocks the active site of INTS11 to inhibit the endonuclease activity of INTS11 before formation of the full integrator complex. Following dissociation of WDR73 of the complex, BRAT1 facilitates the nuclear import of the INTS9-INTS11 heterodimer. In the nucleus, INTS4 is integrated to the INTS9-INTS11 heterodimer and BRAT1 is released from the mature RNA endonuclease module by inositol hexakisphosphate (InsP6). BRAT1 is also involved in DNA damage response; activates kinases ATM, SMC1A and PRKDC by modulating their phosphorylation status following ionizing radiation (IR) stress. Plays a role in regulating mitochondrial function and cell proliferation. Required for protein stability of MTOR and MTOR-related proteins, and cell cycle progress by growth factors. The chain is Integrator complex assembly factor BRAT1 from Mus musculus (Mouse).